The sequence spans 57 residues: Large ribosomal subunit protein bL32 (57 aa).

It belongs to the bacterial ribosomal protein bL32 family.

In Staphylococcus epidermidis (strain ATCC 35984 / DSM 28319 / BCRC 17069 / CCUG 31568 / BM 3577 / RP62A), this protein is Large ribosomal subunit protein bL32.